The following is a 267-amino-acid chain: 4-hydroxy-tetrahydrodipicolinate reductase (267 aa).

NAD(+)-binding positions include 8-13 and glutamate 34; that span reads GAAGRM. Arginine 35 contributes to the NADP(+) binding site. Residues 98–100 and 122–125 each bind NAD(+); these read GST and APNM. Histidine 155 acts as the Proton donor/acceptor in catalysis. Histidine 156 lines the (S)-2,3,4,5-tetrahydrodipicolinate pocket. The active-site Proton donor is the lysine 159. 165-166 serves as a coordination point for (S)-2,3,4,5-tetrahydrodipicolinate; that stretch reads GT.

This sequence belongs to the DapB family.

The protein resides in the cytoplasm. It carries out the reaction (S)-2,3,4,5-tetrahydrodipicolinate + NAD(+) + H2O = (2S,4S)-4-hydroxy-2,3,4,5-tetrahydrodipicolinate + NADH + H(+). The catalysed reaction is (S)-2,3,4,5-tetrahydrodipicolinate + NADP(+) + H2O = (2S,4S)-4-hydroxy-2,3,4,5-tetrahydrodipicolinate + NADPH + H(+). The protein operates within amino-acid biosynthesis; L-lysine biosynthesis via DAP pathway; (S)-tetrahydrodipicolinate from L-aspartate: step 4/4. Catalyzes the conversion of 4-hydroxy-tetrahydrodipicolinate (HTPA) to tetrahydrodipicolinate. The chain is 4-hydroxy-tetrahydrodipicolinate reductase from Geotalea uraniireducens (strain Rf4) (Geobacter uraniireducens).